Consider the following 176-residue polypeptide: HTH-type transcriptional regulator DctR (176 aa).

The HTH luxR-type domain maps to 109-174 (VPEADVSLSR…ELVRHQHINY (66 aa)). Residues 133–152 (TEDILEKLKISLKTFYCHKH) constitute a DNA-binding region (H-T-H motif).

In terms of biological role, may act as a transcriptional regulator of dctA. This Escherichia coli O6:H1 (strain CFT073 / ATCC 700928 / UPEC) protein is HTH-type transcriptional regulator DctR (dctR).